Consider the following 633-residue polypeptide: Pesticidal crystal protein Cry2Ab (633 aa).

The protein belongs to the delta endotoxin family.

Promotes colloidosmotic lysis by binding to the midgut epithelial cells of lepidopteran (Manduca sexta) larvae. The chain is Pesticidal crystal protein Cry2Ab (cry2Ab) from Bacillus thuringiensis subsp. kurstaki.